The sequence spans 209 residues: MNWQLISFFGDSTVLLPSAAALFIVLMLRKTSRLLAWQWSLLFGITGAIVCASKLAFMGWGLGIRELDYTGFSGHSALSAAFWPIFLWLLSARFSVGLRKAAVITGYVLAAVVGYSRLVIHAHSFSEVIAGLLLGAAGSALFLVLQKRTPDPESVHISWGGVACLVMVPLILLHSGSKAPTQSLLGQIATAVGPLDKPFTRTDLHKQAW.

This is an uncharacterized protein from Klebsiella pneumoniae.